A 363-amino-acid chain; its full sequence is Cyanuric acid amidohydrolase (363 aa).

The segment at 1 to 103 (MKTRVTRLTV…LVFEVDDSAP (103 aa)) is RU A. Substrate contacts are provided by residues Arg-51 and 82–83 (SG). The RU B stretch occupies residues 111–247 (GLAAGVAFTR…NEVLVLGNAP (137 aa)). Residue Lys-161 is part of the active site. Residues Arg-193 and 230-231 (SA) contribute to the substrate site. The active-site Nucleophile is the Ser-230. The RU C stretch occupies residues 253–363 (YRIGHAVMED…GGPLALIVRS (111 aa)). Glu-297 is a binding site for Mg(2+). Substrate contacts are provided by residues Arg-324 and 343 to 344 (SG). Positions 346, 349, 350, 351, and 354 each coordinate Mg(2+).

The protein belongs to the cyclic amide hydrolase (CyAH) family. As to quaternary structure, homotetramer.

It catalyses the reaction cyanurate + H2O = 1-carboxybiuret + H(+). Its pathway is xenobiotic degradation; atrazine degradation; biuret from cyanurate: step 1/1. With respect to regulation, inhibited by barbituric acid. Its function is as follows. Responsible for the hydrolysis of cyanuric acid, an intermediate formed during catabolism of s-triazine based compounds in herbicides such as atrazine and polymers such as melamine. Catalyzes the hydrolytic opening of the s-triazine ring of cyanuric acid (2,4,6-trihydroxy-s-triazine) to yield carbon dioxide and carboxybiuret, which spontaneously decarboxylates to biuret. This Ectopseudomonas oleovorans (strain CECT 5344) (Pseudomonas pseudoalcaligenes) protein is Cyanuric acid amidohydrolase.